Reading from the N-terminus, the 182-residue chain is Nucleoside triphosphate/diphosphate phosphatase (182 aa).

Arg-27 acts as the Proton donor in catalysis. Mg(2+) is bound by residues Asn-91, Asp-107, Asp-109, Asp-111, Asp-124, and Glu-127.

Belongs to the Ntdp family. Mg(2+) serves as cofactor.

The catalysed reaction is a ribonucleoside 5'-triphosphate + H2O = a ribonucleoside 5'-diphosphate + phosphate + H(+). It catalyses the reaction a ribonucleoside 5'-diphosphate + H2O = a ribonucleoside 5'-phosphate + phosphate + H(+). Its function is as follows. Has nucleoside phosphatase activity towards nucleoside triphosphates and nucleoside diphosphates. This is Nucleoside triphosphate/diphosphate phosphatase from Lactiplantibacillus plantarum (strain ATCC BAA-793 / NCIMB 8826 / WCFS1) (Lactobacillus plantarum).